Consider the following 597-residue polypeptide: MAASTSMVPVAVTAAVAPVLSINSDFSDLREIKKQLLLIAGLTRERGLLHSSKWSAELAFSLPALPLAELQPPPPITEEDAQDMDAYTLAKAYFDVKEYDRAAHFLHGCNSKKAYFLYMYSRYLSGEKKKDDETVDSLGPLEKGQVKNEALRELRVELSKKHQARELDGFGLYLYGVVLRKLDLVKEAIDVFVEATHVLPLHWGAWLELCNLITDKEMLKFLSLPDTWMKEFFLAHIYTELQLIEEALQKYQNLIDVGFSKSSYIVSQIAVAYHNIRDIDKALSIFNELRKQDPYRIENMDTFSNLLYVRSMKSELSYLAHNLCEIDKYRVETCCVIGNYYSLRSQHEKAALYFQRALKLNPRYLGAWTLMGHEYMEMKNTSAAIQAYRHAIEVNKRDYRAWYGLGQTYEILKMPFYCLYYYRRAHQLRPNDSRMLVALGECYEKLNQLVEAKKCYWRAYAVGDVEKMALVKLAKLHEQLTESEQAAQCYIKYIQDIYSCGEIVEHLEESTAFRYLAQYYFKCKLWDEASTCAQKCCAFNDTREEGKALLRQILQLRNQGETPTTEVPAPFFLPASLSANNTPTRRVSPLNLSSVTP.

At Ala2 the chain carries N-acetylalanine. 3 TPR repeats span residues 27–63 (SDLR…FSLP), 73–112 (PPPI…CNSK), and 114–144 (AYFL…LEKG). A Glycyl lysine isopeptide (Lys-Gly) (interchain with G-Cter in SUMO2) cross-link involves residue Lys147. 8 TPR repeats span residues 169 to 200 (GFGL…HVLP), 229 to 259 (MKEF…DVGF), 263 to 293 (SYIV…RKQD), 297 to 327 (IENM…CEID), 331 to 361 (VETC…LKLN), 366 to 395 (GAWT…IEVN), 400 to 432 (RAWY…RPND), and 433 to 466 (SRML…GDVE). Tyr273 carries the post-translational modification Phosphotyrosine. Lys467 is modified (N6-acetyllysine). 2 TPR repeats span residues 468–500 (MALV…IYSC) and 504–540 (VEHL…CAFN). 2 positions are modified to phosphothreonine: Thr562 and Thr565. The residue at position 578 (Ser578) is a Phosphoserine. Thr582 carries the post-translational modification Phosphothreonine. 2 positions are modified to phosphoserine: Ser588 and Ser593. Thr596 is subject to Phosphothreonine.

This sequence belongs to the APC8/CDC23 family. The mammalian APC/C is composed at least of 14 distinct subunits ANAPC1, ANAPC2, CDC27/APC3, ANAPC4, ANAPC5, CDC16/APC6, ANAPC7, CDC23/APC8, ANAPC10, ANAPC11, CDC26/APC12, ANAPC13, ANAPC15 and ANAPC16 that assemble into a complex of at least 19 chains with a combined molecular mass of around 1.2 MDa; APC/C interacts with FZR1 and FBXO5. Interacts with FBXO43; the interaction is direct. Post-translationally, phosphorylated. Phosphorylation on Thr-562 occurs specifically during mitosis.

The protein operates within protein modification; protein ubiquitination. Its function is as follows. Component of the anaphase promoting complex/cyclosome (APC/C), a cell cycle-regulated E3 ubiquitin ligase that controls progression through mitosis and the G1 phase of the cell cycle. The APC/C complex acts by mediating ubiquitination and subsequent degradation of target proteins: it mainly mediates the formation of 'Lys-11'-linked polyubiquitin chains and, to a lower extent, the formation of 'Lys-48'- and 'Lys-63'-linked polyubiquitin chains. The APC/C complex catalyzes assembly of branched 'Lys-11'-/'Lys-48'-linked branched ubiquitin chains on target proteins. This chain is Cell division cycle protein 23 homolog (CDC23), found in Homo sapiens (Human).